The chain runs to 276 residues: Tryptase beta-2 (276 aa).

The N-terminal stretch at 1–21 (MLKRRLLLLWALSLLASLVYS) is a signal peptide. Positions 22 to 31 (APRPANQRVG) are cleaved as a propeptide — activation peptide. Residues 32–273 (IVGGHEASES…YLDWIHRYVP (242 aa)) form the Peptidase S1 domain. A disulfide bond links Cys-60 and Cys-76. The Charge relay system role is filled by His-75. Position 98 is a phosphotyrosine (Tyr-98). The active-site Charge relay system is the Asp-122. Asn-133 carries N-linked (GlcNAc...) asparagine glycosylation. 3 disulfide bridges follow: Cys-156-Cys-231, Cys-189-Cys-212, and Cys-221-Cys-249. Residue Ser-225 is the Charge relay system of the active site.

It belongs to the peptidase S1 family. Tryptase subfamily. In terms of assembly, homotetramer. The active tetramer is converted to inactive monomers at neutral and acidic pH in the absence of heparin. Low concentrations of inactive monomers become active monomers at pH 6.0 in the presence of heparin. When the concentration of active monomers is higher, they convert to active monomers and then to active tetramers. These monomers are active and functionally distinct from the tetrameric enzyme. In contrast to the hidden active sites in the tetrameric form, the active site of the monomeric form is accessible for macromolecular proteins and inhibitors, e.g. fibrinogen which is a substrate for the monomeric but not for the tetrameric form. The monomeric form forms a complex with SERPINB6. As to expression, during embryogenesis, detected primarily in skin.

It is found in the secreted. The enzyme catalyses Preferential cleavage: Arg-|-Xaa, Lys-|-Xaa, but with more restricted specificity than trypsin.. Functionally, tryptase is the major neutral protease present in mast cells and is secreted upon the coupled activation-degranulation response of this cell type. Plays a role in innate immunity. This chain is Tryptase beta-2 (Tpsb2), found in Mus musculus (Mouse).